A 508-amino-acid chain; its full sequence is uncharacterized protein (508 aa).

A run of 12 helical transmembrane segments spans residues 65-87 (IFPV…SYAV), 104-124 (WSGT…SLLL), 136-156 (FLVI…PGFI), 160-180 (VLLG…TAQW), 192-212 (VWVA…YGLA), 224-244 (LIFI…LAVV), 292-312 (TWIM…IGTF), 333-353 (LPAG…SLFI), 357-377 (MVLA…LSFA), 384-404 (LAGY…FAII), 416-436 (TVGV…PQTF), and 450-470 (TMVG…YVNW).

This sequence belongs to the major facilitator superfamily. Allantoate permease family.

It localises to the endoplasmic reticulum. The protein resides in the golgi apparatus. It is found in the membrane. This is an uncharacterized protein from Schizosaccharomyces pombe (strain 972 / ATCC 24843) (Fission yeast).